The following is a 61-amino-acid chain: uncharacterized protein (61 aa).

A disordered region spans residues 36 to 61 (RLTDVPPQPNSPPDNVFNPDQPRMGP).

This sequence belongs to the ART2/RRT15 family.

This is an uncharacterized protein from Saccharomyces cerevisiae (strain ATCC 204508 / S288c) (Baker's yeast).